A 405-amino-acid chain; its full sequence is Formate-dependent phosphoribosylglycinamide formyltransferase (405 aa).

N(1)-(5-phospho-beta-D-ribosyl)glycinamide-binding positions include 22 to 23 (EL) and Glu-82. Residues Arg-115, Lys-162, 167–172 (SSGKGQ), 202–205 (EGFI), and Glu-210 contribute to the ATP site. In terms of domain architecture, ATP-grasp spans 120–320 (RLAAETLGLA…EFELHARAIL (201 aa)). Mg(2+) contacts are provided by Glu-279 and Glu-291. N(1)-(5-phospho-beta-D-ribosyl)glycinamide is bound by residues Asp-298, Lys-367, and 374 to 375 (RR).

This sequence belongs to the PurK/PurT family. As to quaternary structure, homodimer.

It catalyses the reaction N(1)-(5-phospho-beta-D-ribosyl)glycinamide + formate + ATP = N(2)-formyl-N(1)-(5-phospho-beta-D-ribosyl)glycinamide + ADP + phosphate + H(+). Its pathway is purine metabolism; IMP biosynthesis via de novo pathway; N(2)-formyl-N(1)-(5-phospho-D-ribosyl)glycinamide from N(1)-(5-phospho-D-ribosyl)glycinamide (formate route): step 1/1. Its function is as follows. Involved in the de novo purine biosynthesis. Catalyzes the transfer of formate to 5-phospho-ribosyl-glycinamide (GAR), producing 5-phospho-ribosyl-N-formylglycinamide (FGAR). Formate is provided by PurU via hydrolysis of 10-formyl-tetrahydrofolate. The sequence is that of Formate-dependent phosphoribosylglycinamide formyltransferase from Delftia acidovorans (strain DSM 14801 / SPH-1).